A 549-amino-acid chain; its full sequence is Beta-mannosyltransferase 3 (549 aa).

The Cytoplasmic segment spans residues 1 to 37 (MFESDLSFYSALLILCCPISIVFFKKFPIKGYTGANK). The chain crosses the membrane as a helical span at residues 38 to 58 (VSLFLQCLIAILNLNILYSFI). Residues 59 to 549 (NSLTITLGHD…DTMGWDKLSR (491 aa)) lie on the Extracellular side of the membrane.

Belongs to the BMT family.

It localises to the membrane. Functionally, beta-mannosyltransferase involved in cell wall biosynthesis. Required for addition of the second beta-mannose residue to acid-stable fraction of cell wall phosphopeptidomannan, and in elongation of beta-mannose chains on the phosphopeptidomannan acid-labile fraction. This is Beta-mannosyltransferase 3 (BMT3) from Candida albicans (strain SC5314 / ATCC MYA-2876) (Yeast).